A 241-amino-acid polypeptide reads, in one-letter code: tRNA pseudouridine synthase A (241 aa).

Catalysis depends on D53, which acts as the Nucleophile. Y110 serves as a coordination point for substrate.

This sequence belongs to the tRNA pseudouridine synthase TruA family. Homodimer.

The enzyme catalyses uridine(38/39/40) in tRNA = pseudouridine(38/39/40) in tRNA. In terms of biological role, formation of pseudouridine at positions 38, 39 and 40 in the anticodon stem and loop of transfer RNAs. In Malacoplasma penetrans (strain HF-2) (Mycoplasma penetrans), this protein is tRNA pseudouridine synthase A.